We begin with the raw amino-acid sequence, 139 residues long: TDP-4-oxo-6-deoxy-alpha-D-glucose-3,4-oxoisomerase (139 aa).

His-49 acts as the Proton acceptor in catalysis.

In terms of assembly, homodimer.

It carries out the reaction dTDP-4-dehydro-6-deoxy-alpha-D-glucose = dTDP-3-dehydro-6-deoxy-alpha-D-galactose. Mediates the isomerization of dTDP-6-deoxy-D-xylohex-4-ulose into dTDP-6-deoxy-D-xylohex-3-ulose in the biosynthesis of dTDP-3-acetamido-3,6-dideoxy-alpha-D-galactose, a glycan chain of the S-layer. This chain is TDP-4-oxo-6-deoxy-alpha-D-glucose-3,4-oxoisomerase (fdtA), found in Aneurinibacillus thermoaerophilus.